A 344-amino-acid chain; its full sequence is Serpentine receptor class H-72 (344 aa).

Helical transmembrane passes span 30–50 (GLAF…FFTG), 66–86 (LSLV…SFFI), 110–132 (TVVQ…TLLF), 155–175 (WLAG…FNLA), 221–241 (SIYM…LVIV), 259–279 (YGLI…SVLI), and 292–312 (LVSI…LLVH).

The protein belongs to the nematode receptor-like protein srh family.

The protein localises to the membrane. The sequence is that of Serpentine receptor class H-72 (srh-72) from Caenorhabditis elegans.